Consider the following 325-residue polypeptide: GMP reductase (325 aa).

The active-site Thioimidate intermediate is the cysteine 174. 203 to 226 contributes to the NADP(+) binding site; the sequence is LIADGGIRTHGDIAKSIRFGATMV.

Belongs to the IMPDH/GMPR family. GuaC type 2 subfamily.

It catalyses the reaction IMP + NH4(+) + NADP(+) = GMP + NADPH + 2 H(+). In terms of biological role, catalyzes the irreversible NADPH-dependent deamination of GMP to IMP. It functions in the conversion of nucleobase, nucleoside and nucleotide derivatives of G to A nucleotides, and in maintaining the intracellular balance of A and G nucleotides. This chain is GMP reductase, found in Pediococcus pentosaceus (strain ATCC 25745 / CCUG 21536 / LMG 10740 / 183-1w).